The following is a 437-amino-acid chain: uncharacterized protein (437 aa).

Residues 47-67 traverse the membrane as a helical segment; the sequence is LLIILIGFILLSSISAIQIDA.

Its subcellular location is the membrane. This is an uncharacterized protein from Methanocaldococcus jannaschii (strain ATCC 43067 / DSM 2661 / JAL-1 / JCM 10045 / NBRC 100440) (Methanococcus jannaschii).